The primary structure comprises 539 residues: 4-coumarate--CoA ligase 5 (539 aa).

ATP-binding residues include Ser185, Ser186, Gly187, Thr188, Thr189, and Lys193. Residues Tyr235 and Ser239 each coordinate (E)-4-coumaroyl-AMP. Arg256 contacts CoA. An SBD1 region spans residues 258–327 (DTVKMLQLVE…AKLPNAVLGQ (70 aa)). Positions 305, 327, 328, 332, and 340 each coordinate (E)-4-coumaroyl-AMP. Residues Gln327, Gly328, and Thr332 each contribute to the ATP site. Residues 328–395 (GYGMTEAGPV…IRGKQIMKGY (68 aa)) are SBD2. Residues Asp416 and Arg431 each coordinate ATP. 2 residues coordinate (E)-4-coumaroyl-AMP: Lys433 and Lys437. Residues Lys439 and Gly440 each coordinate CoA. Position 522 (Lys522) interacts with ATP.

This sequence belongs to the ATP-dependent AMP-binding enzyme family. It depends on Mg(2+) as a cofactor. Expressed in roots, stems, leaf blades, leaf sheaths and spikelets.

The catalysed reaction is (E)-ferulate + ATP + CoA = (E)-feruloyl-CoA + AMP + diphosphate. It carries out the reaction (E)-4-coumarate + ATP + CoA = (E)-4-coumaroyl-CoA + AMP + diphosphate. It catalyses the reaction (E)-sinapate + ATP + CoA = (E)-sinapoyl-CoA + AMP + diphosphate. The enzyme catalyses (E)-caffeate + ATP + CoA = (E)-caffeoyl-CoA + AMP + diphosphate. The catalysed reaction is (E)-cinnamate + ATP + CoA = (E)-cinnamoyl-CoA + AMP + diphosphate. It carries out the reaction (E)-ferulate + ATP + H(+) = (E)-feruloyl-AMP + diphosphate. It catalyses the reaction (E)-feruloyl-AMP + CoA = (E)-feruloyl-CoA + AMP + H(+). The enzyme catalyses (E)-4-coumarate + ATP + H(+) = (E)-4-coumaroyl-AMP + diphosphate. The catalysed reaction is (E)-4-coumaroyl-AMP + CoA = (E)-4-coumaroyl-CoA + AMP + H(+). It carries out the reaction (E)-sinapate + ATP + H(+) = (E)-sinapoyl-AMP + diphosphate. It catalyses the reaction (E)-sinapoyl-AMP + CoA = (E)-sinapoyl-CoA + AMP + H(+). The enzyme catalyses (E)-caffeate + ATP + H(+) = (E)-caffeoyl-AMP + diphosphate. The catalysed reaction is (E)-caffeoyl-AMP + CoA = (E)-caffeoyl-CoA + AMP + H(+). It participates in phytoalexin biosynthesis; 3,4',5-trihydroxystilbene biosynthesis; 3,4',5-trihydroxystilbene from trans-4-coumarate: step 1/2. Involved in the phenylpropanoid metabolism by mediating the activation of a number of hydroxycinnamates for the biosynthesis of monolignols and other phenolic secondary metabolites. Catalyzes the formation of CoA esters of cinnamate, 4-coumarate, caffeate and ferulate. Is also able to convert sinapate to its corresponding CoA ester, a reaction that is rarely observed in 4CL catalysis. Is more efficient with substrates in the following order: ferulate &gt; 4-coumarate &gt; sinapate &gt; caffeate &gt; cinnamate. Follows a two-step reaction mechanism, wherein the carboxylate substrate first undergoes adenylation by ATP, followed by a thioesterification in the presence of CoA to yield the final CoA thioesters. This is 4-coumarate--CoA ligase 5 from Oryza sativa subsp. japonica (Rice).